Consider the following 336-residue polypeptide: Ferrochelatase (336 aa).

Histidine 206 and glutamate 287 together coordinate Fe cation.

This sequence belongs to the ferrochelatase family.

The protein resides in the cytoplasm. The catalysed reaction is heme b + 2 H(+) = protoporphyrin IX + Fe(2+). It participates in porphyrin-containing compound metabolism; protoheme biosynthesis; protoheme from protoporphyrin-IX: step 1/1. In terms of biological role, catalyzes the ferrous insertion into protoporphyrin IX. The polypeptide is Ferrochelatase (Neisseria meningitidis serogroup C / serotype 2a (strain ATCC 700532 / DSM 15464 / FAM18)).